Consider the following 191-residue polypeptide: Ribonuclease HII (191 aa).

In terms of domain architecture, RNase H type-2 spans 16 to 191; that stretch reads INLIGIDEAG…KLHRKSFKLL (176 aa). Residues aspartate 22, glutamate 23, and aspartate 110 each contribute to the a divalent metal cation site.

Belongs to the RNase HII family. Mn(2+) serves as cofactor. Requires Mg(2+) as cofactor.

Its subcellular location is the cytoplasm. It carries out the reaction Endonucleolytic cleavage to 5'-phosphomonoester.. Functionally, endonuclease that specifically degrades the RNA of RNA-DNA hybrids. The sequence is that of Ribonuclease HII from Campylobacter jejuni subsp. jejuni serotype O:6 (strain 81116 / NCTC 11828).